Here is a 119-residue protein sequence, read N- to C-terminus: MSSSATSTQAFSLKTRQPIPDEDALLTEEDRILKQATKGEDCTTRRRACKNCVCGRAELERKLEAEGKLEAEALAMPPGGCGNCSKGDAFRCANCPFLGQPAFDATEDGKVKLNLTDDV.

Positions Met-1–Thr-15 are enriched in polar residues. Disordered regions lie at residues Met-1 to Asp-21 and Leu-33 to Val-119. Residues Cys-42, Cys-49, Cys-52, and Cys-54 each coordinate [2Fe-2S] cluster. A fe-S binding site A region spans residues Cys-42 to Cys-54. Residues Cys-81, Cys-84, Cys-92, and Cys-95 each coordinate [4Fe-4S] cluster. 2 consecutive short sequence motifs (cx2C motif) follow at residues Cys-81–Cys-84 and Cys-92–Cys-95. The segment at Cys-81–Cys-95 is fe-S binding site B.

It belongs to the anamorsin family. In terms of assembly, monomer. It depends on [2Fe-2S] cluster as a cofactor. [4Fe-4S] cluster serves as cofactor.

The protein localises to the cytoplasm. It is found in the mitochondrion intermembrane space. Component of the cytosolic iron-sulfur (Fe-S) protein assembly (CIA) machinery. Required for the maturation of extramitochondrial Fe-S proteins. Part of an electron transfer chain functioning in an early step of cytosolic Fe-S biogenesis, facilitating the de novo assembly of a [4Fe-4S] cluster on the cytosolic Fe-S scaffold complex. Electrons are transferred from NADPH via a FAD- and FMN-containing diflavin oxidoreductase. Together with the diflavin oxidoreductase, also required for the assembly of the diferric tyrosyl radical cofactor of ribonucleotide reductase (RNR), probably by providing electrons for reduction during radical cofactor maturation in the catalytic small subunit. In Leishmania infantum, this protein is Anamorsin homolog.